Consider the following 542-residue polypeptide: Glutamyl-tRNA reductase 2, chloroplastic (542 aa).

Substrate contacts are provided by residues 142–145, Ser202, 207–209, and Gln213; these read TCNR and EGQ. Residue Cys143 is the Nucleophile of the active site. 284–289 contributes to the NADP(+) binding site; that stretch reads GAGKMG.

Belongs to the glutamyl-tRNA reductase family. As to expression, found in all tissues examined.

It is found in the plastid. Its subcellular location is the chloroplast. It catalyses the reaction (S)-4-amino-5-oxopentanoate + tRNA(Glu) + NADP(+) = L-glutamyl-tRNA(Glu) + NADPH + H(+). It participates in porphyrin-containing compound metabolism; protoporphyrin-IX biosynthesis; 5-aminolevulinate from L-glutamyl-tRNA(Glu): step 1/2. In terms of biological role, catalyzes the NADPH-dependent reduction of glutamyl-tRNA(Glu) to glutamate 1-semialdehyde (GSA). The protein is Glutamyl-tRNA reductase 2, chloroplastic (HEMA2) of Cucumis sativus (Cucumber).